A 380-amino-acid chain; its full sequence is Cytochrome b (380 aa).

Transmembrane regions (helical) follow at residues 34-54 (FGSLLGICLVTQILTGLLLAM), 78-99 (WLIRNLHANGASLFFICIYMHI), 114-134 (WNTGIILLLTLMATAFVGYVL), and 179-199 (FFALHFLLPFLIAGLTLIHLT). Heme b is bound by residues H84 and H98. Positions 183 and 197 each coordinate heme b. Position 202 (H202) interacts with a ubiquinone. Helical transmembrane passes span 227-247 (SKDILGFMLLYFLLTTLALFS), 289-309 (LGGVLALAASILILFLSPFLH), 321-341 (LSQMLFWLLVTNLLILTWIGS), and 348-368 (FIIIGQLASLTYFTILLILLP).

The protein belongs to the cytochrome b family. In terms of assembly, the cytochrome bc1 complex contains 11 subunits: 3 respiratory subunits (MT-CYB, CYC1 and UQCRFS1), 2 core proteins (UQCRC1 and UQCRC2) and 6 low-molecular weight proteins (UQCRH/QCR6, UQCRB/QCR7, UQCRQ/QCR8, UQCR10/QCR9, UQCR11/QCR10 and a cleavage product of UQCRFS1). This cytochrome bc1 complex then forms a dimer. Heme b serves as cofactor.

The protein resides in the mitochondrion inner membrane. Component of the ubiquinol-cytochrome c reductase complex (complex III or cytochrome b-c1 complex) that is part of the mitochondrial respiratory chain. The b-c1 complex mediates electron transfer from ubiquinol to cytochrome c. Contributes to the generation of a proton gradient across the mitochondrial membrane that is then used for ATP synthesis. The chain is Cytochrome b (MT-CYB) from Caracara plancus (Southern caracara).